Reading from the N-terminus, the 473-residue chain is Photosystem II CP43 reaction center protein (473 aa).

A propeptide spanning residues 1-14 (MKILYSLRRFYHVE) is cleaved from the precursor. T15 is subject to N-acetylthreonine. A Phosphothreonine modification is found at T15. 5 consecutive transmembrane segments (helical) span residues 69 to 93 (LFEVAHFVPEKPMYEQGLILLPHLA), 134 to 155 (LLGPETLEESFPFFGYVWQDRN), 178 to 200 (KALYFGGVYDTWAPGGGDVRKIT), 255 to 275 (KPFAWARRAFVWSGEAYLSYS), and 291 to 312 (WFNNTAYPSEFYGPTGPEASQA). E367 lines the [CaMn4O5] cluster pocket. The chain crosses the membrane as a helical span at residues 447–471 (RARAAAAGFEKGIDRDLEPVVYMTP).

The protein belongs to the PsbB/PsbC family. PsbC subfamily. PSII is composed of 1 copy each of membrane proteins PsbA, PsbB, PsbC, PsbD, PsbE, PsbF, PsbH, PsbI, PsbJ, PsbK, PsbL, PsbM, PsbT, PsbX, PsbY, PsbZ, Psb30/Ycf12, at least 3 peripheral proteins of the oxygen-evolving complex and a large number of cofactors. It forms dimeric complexes. Requires Binds multiple chlorophylls and provides some of the ligands for the Ca-4Mn-5O cluster of the oxygen-evolving complex. It may also provide a ligand for a Cl- that is required for oxygen evolution. PSII binds additional chlorophylls, carotenoids and specific lipids. as cofactor. In terms of processing, phosphorylated in both bundle sheath and mesophyll cells, phosphorylation increases when cells are grown under high rather than low light regimes (70 vs 900 umol photons/m-2/s).

The protein resides in the plastid. It localises to the chloroplast thylakoid membrane. Functionally, one of the components of the core complex of photosystem II (PSII). It binds chlorophyll and helps catalyze the primary light-induced photochemical processes of PSII. PSII is a light-driven water:plastoquinone oxidoreductase, using light energy to abstract electrons from H(2)O, generating O(2) and a proton gradient subsequently used for ATP formation. The polypeptide is Photosystem II CP43 reaction center protein (Zea mays (Maize)).